Consider the following 555-residue polypeptide: Glutamine--tRNA ligase (555 aa).

The short motif at 35-45 (PEPNGYLHIGH) is the 'HIGH' region element. ATP-binding positions include 36 to 38 (EPN) and 42 to 48 (HIGHAKS). 2 residues coordinate L-glutamine: aspartate 68 and tyrosine 213. ATP contacts are provided by residues threonine 232 and 262–263 (RL). Residues 269 to 273 (ITSKR) carry the 'KMSKS' region motif.

This sequence belongs to the class-I aminoacyl-tRNA synthetase family. In terms of assembly, monomer.

It is found in the cytoplasm. It carries out the reaction tRNA(Gln) + L-glutamine + ATP = L-glutaminyl-tRNA(Gln) + AMP + diphosphate. In Stutzerimonas stutzeri (strain A1501) (Pseudomonas stutzeri), this protein is Glutamine--tRNA ligase.